Reading from the N-terminus, the 30-residue chain is ATP-dependent Clp protease ATP-binding subunit ClpA homolog (30 aa).

Belongs to the ClpA/ClpB family.

It localises to the plastid. The protein localises to the chloroplast. Its function is as follows. May interact with a ClpP-like protease involved in degradation of denatured proteins in the chloroplast. The polypeptide is ATP-dependent Clp protease ATP-binding subunit ClpA homolog (Pinus pinaster (Maritime pine)).